The chain runs to 788 residues: Autophagy-related protein 9 (788 aa).

Over 1-171 the chain is Cytoplasmic; sequence MTDKSTFLSV…EAYMYYTGKG (171 aa). The span at 32 to 42 shows a compositional bias: basic and acidic residues; that stretch reads ILRRVEEEHAQ. The disordered stretch occupies residues 32–127; it reads ILRRVEEEHA…TGVANGGLPR (96 aa). The span at 44 to 58 shows a compositional bias: low complexity; that stretch reads SDNSNSDNDSGNDSD. Polar residues predominate over residues 101–112; it reads SFAQGTKTQTPI. Residues 172–192 traverse the membrane as a helical segment; it reads LVSIILSRVLNMSTIMFVVVF. The Lumenal segment spans residues 193-222; it reads STYLGSCIDYSKIKGSRTLDEVHVKQCYAK. Residues 223-243 form a helical membrane-spanning segment; it reads LGSFHVFVLWTFFVLWFMKLF. At 244 to 390 the chain is on the cytoplasmic side; that stretch reads QYVKDIRRLV…QILSTGLRRR (147 aa). Residue Phe-391 is an intramembrane region. Topologically, residues 392–479 are cytoplasmic; that stretch reads VFAAIMNVVF…PKEKTALVSK (88 aa). Residues 480–500 form a helical membrane-spanning segment; it reads FVSFIAGSFAAVLGIASLIDP. Residues 501–512 are Lumenal-facing; it reads ELFLMFEISANR. A helical transmembrane segment spans residues 513–533; the sequence is TVLFYIGVFGSILAVSRSLIP. The Cytoplasmic segment spans residues 534-579; it reads EETLVFDPEISLRYVAEFTHYLPPEWEGKLHTEQVKNEFSLMYEMR. Residues 580 to 600 lie within the membrane without spanning it; that stretch reads LIILLKELASIFLAPFILYYS. The Cytoplasmic portion of the chain corresponds to 601–788; sequence LTQSCDDIVD…KKTDNMNLGA (188 aa). A disordered region spans residues 715-736; that stretch reads LSPAAPTATTATSGTATGAAPR. A compositionally biased stretch (low complexity) spans 716 to 734; that stretch reads SPAAPTATTATSGTATGAA.

This sequence belongs to the ATG9 family. In terms of assembly, homotrimer; forms a homotrimer with a central pore that forms a path between the two membrane leaflets. Phosphorylated by ATG1. ATG1 phosphorylation is required for preautophagosome elongation.

The protein localises to the preautophagosomal structure membrane. Its subcellular location is the cytoplasmic vesicle membrane. It is found in the golgi apparatus membrane. It localises to the endoplasmic reticulum membrane. It carries out the reaction a 1,2-diacyl-sn-glycero-3-phosphocholine(in) = a 1,2-diacyl-sn-glycero-3-phosphocholine(out). The enzyme catalyses a 1,2-diacyl-sn-glycero-3-phospho-L-serine(in) = a 1,2-diacyl-sn-glycero-3-phospho-L-serine(out). The catalysed reaction is a 1,2-diacyl-sn-glycero-3-phosphoethanolamine(in) = a 1,2-diacyl-sn-glycero-3-phosphoethanolamine(out). It catalyses the reaction a 1,2-diacyl-sn-glycero-3-phospho-(1D-myo-inositol-3-phosphate)(in) = a 1,2-diacyl-sn-glycero-3-phospho-(1D-myo-inositol-3-phosphate)(out). Phospholipid scramblase involved in autophagy and cytoplasm to vacuole transport (Cvt) vesicle formation. Cycles between the preautophagosomal structure/phagophore assembly site (PAS) and the cytoplasmic vesicle pool and supplies membrane for the growing autophagosome. Lipid scramblase activity plays a key role in preautophagosomal structure/phagophore assembly by distributing the phospholipids that arrive through ATG2 from the cytoplasmic to the luminal leaflet of the bilayer, thereby driving autophagosomal membrane expansion. Required for mitophagy. Also involved in endoplasmic reticulum-specific autophagic process and is essential for the survival of cells subjected to severe ER stress. Different machineries are required for anterograde trafficking to the PAS during either the Cvt pathway or bulk autophagy and for retrograde trafficking. In Yarrowia lipolytica (strain CLIB 122 / E 150) (Yeast), this protein is Autophagy-related protein 9.